A 341-amino-acid chain; its full sequence is Glyceraldehyde-3-phosphate dehydrogenase 2 (341 aa).

NAD(+) contacts are provided by residues 13 to 14 (RI), Asp-35, and Arg-85. D-glyceraldehyde 3-phosphate contacts are provided by residues 157–159 (SCT), Thr-188, 217–218 (TG), and Arg-240. The Nucleophile role is filled by Cys-158. Asn-322 provides a ligand contact to NAD(+).

This sequence belongs to the glyceraldehyde-3-phosphate dehydrogenase family. As to quaternary structure, homotetramer.

The protein resides in the cytoplasm. The catalysed reaction is D-glyceraldehyde 3-phosphate + phosphate + NAD(+) = (2R)-3-phospho-glyceroyl phosphate + NADH + H(+). It participates in carbohydrate degradation; glycolysis; pyruvate from D-glyceraldehyde 3-phosphate: step 1/5. In Caenorhabditis elegans, this protein is Glyceraldehyde-3-phosphate dehydrogenase 2 (gpd-2).